A 540-amino-acid chain; its full sequence is MNIFIGGAWPYANGSLHLGHVAALLPGDVMARYFRAKGENVLYVSGSDCHGTPISIRAKNENVSPQEIAEQYHKEFKYCFEELGFSYDYYSRTDDAYHKEEVQRIIKLLYENEFIYEKEVEQLYCADCNQFLPDRFVEGICPVCKNIARGDQCDVCSTILDPLDLHHRKCKICGSEPEIKNGNQLFFKLSKFQEMLQNHLEDSKKKWRVNALNNTERYLKEGLQDRAISRDLNWGIEIPIKGYEEKRVYVWIDAVLGYYTVSKKWGIERNRDWETFWSKEAIHYFIHGKDNIPFHSLIFPALLNGIGYKKMPDRIISSEYITLEGKKISTSNNWAVWVPDMIERYNVDSIRYFLLANGPEKRDADFSWREFINSNNGELLGAYGNLVNRTFVFVKKYFNNTIPVGKLEEEIERATEKLYDEVGKSIESGNLRLALEQIFQFIRSINKYFDEETPWTTVNTNIDDCSNTIYNCLFSIINIANLLNPFLPSSSAKIKEWMGCKEASWNKLSLSSGIQLGDFNILFERLDKKLAEEELAKLGR.

Positions Pro10–His20 match the 'HIGH' region motif. 4 residues coordinate Zn(2+): Cys141, Cys144, Cys153, and Cys156. The 'KMSKS' region signature appears at Lys327 to Ser331. ATP is bound at residue Thr330.

This sequence belongs to the class-I aminoacyl-tRNA synthetase family. MetG type 1 subfamily. As to quaternary structure, monomer. Requires Zn(2+) as cofactor.

It localises to the cytoplasm. It catalyses the reaction tRNA(Met) + L-methionine + ATP = L-methionyl-tRNA(Met) + AMP + diphosphate. Functionally, is required not only for elongation of protein synthesis but also for the initiation of all mRNA translation through initiator tRNA(fMet) aminoacylation. This chain is Methionine--tRNA ligase 1, found in Alkaliphilus oremlandii (strain OhILAs) (Clostridium oremlandii (strain OhILAs)).